We begin with the raw amino-acid sequence, 845 residues long: Tyrosine-protein phosphatase corkscrew (845 aa).

2 consecutive SH2 domains span residues 6–101 and 111–205; these read WFHP…KQPL and WFHG…RQPF. The Tyrosine-protein phosphatase domain maps to 227 to 645; sequence FWEEFESLQQ…KFVYYAVQHY (419 aa). The tract at residues 289–444 is PTPase insert (Cys/Ser-rich); it reads IRLPTDGDLY…REREREMFKT (156 aa). The segment at 362–402 is disordered; it reads SKHKRSESSASSSPSSGSGSGPGSSGTSGVSSVNGPGTPTN. Low complexity-rich tracts occupy residues 369–378 and 388–400; these read SSASSSPSSG and TSGVSSVNGPGTP. Phosphoserine is present on Ser-419. Substrate-binding positions include Asp-545, 583–589, and Gln-630; that span reads CSAGIGR. The active-site Phosphocysteine intermediate is Cys-583. Residues 793 to 824 form a disordered region; it reads DSLKQQQQREEQAPAGAGKMQQPAPPLRPRPG.

It belongs to the protein-tyrosine phosphatase family. Non-receptor class subfamily. In terms of assembly, interacts with drpr isoform A. Expressed uniformly throughout all tissues during embryogenesis.

The protein localises to the cytoplasm. It carries out the reaction O-phospho-L-tyrosyl-[protein] + H2O = L-tyrosyl-[protein] + phosphate. In terms of biological role, required in all receptor tyrosine kinase signaling pathways. Functions downstream of the receptor tyrosine kinase torso, acting in concert with D-Raf via tailless. Also functions downstream of Egfr (epidermal growth factor receptor) and btl (fibroblast growth factor receptor). The SH2 domain suggests that csw effects its role by mediating heteromeric protein interactions. Maternally required for normal determination of cell fates at the termini of the embryo. Required for cell fate specification of the ventral ectoderm, in the developing embryonic CNS and for embryonic tracheal cell migration. Functions during imaginal development for proper formation of adult structures such as eyes, aristae, L5 wing vein and the tarsal claw. Dephosphorylates drpr isoform A which is required for the inhibition by drpr isoform A of glial cell engulfment of axonal debris produced following axonal injury. This is Tyrosine-protein phosphatase corkscrew (csw) from Drosophila melanogaster (Fruit fly).